Reading from the N-terminus, the 186-residue chain is ATP-dependent protease subunit HslV (186 aa).

Thr14 is an active-site residue. Positions 168, 171, and 174 each coordinate Na(+).

This sequence belongs to the peptidase T1B family. HslV subfamily. In terms of assembly, a double ring-shaped homohexamer of HslV is capped on each side by a ring-shaped HslU homohexamer. The assembly of the HslU/HslV complex is dependent on binding of ATP.

It is found in the cytoplasm. The catalysed reaction is ATP-dependent cleavage of peptide bonds with broad specificity.. Its activity is regulated as follows. Allosterically activated by HslU binding. Protease subunit of a proteasome-like degradation complex believed to be a general protein degrading machinery. The chain is ATP-dependent protease subunit HslV from Bradyrhizobium diazoefficiens (strain JCM 10833 / BCRC 13528 / IAM 13628 / NBRC 14792 / USDA 110).